The following is a 124-amino-acid chain: S-adenosylmethionine decarboxylase proenzyme (124 aa).

Ser63 functions as the Schiff-base intermediate with substrate; via pyruvic acid in the catalytic mechanism. Residue Ser63 is modified to Pyruvic acid (Ser); by autocatalysis. The active-site Proton acceptor; for processing activity is His68. The Proton donor; for catalytic activity role is filled by Cys83.

It belongs to the prokaryotic AdoMetDC family. Type 1 subfamily. Heterotetramer of two alpha and two beta chains arranged as a dimer of alpha/beta heterodimers. Pyruvate serves as cofactor. In terms of processing, is synthesized initially as an inactive proenzyme. Formation of the active enzyme involves a self-maturation process in which the active site pyruvoyl group is generated from an internal serine residue via an autocatalytic post-translational modification. Two non-identical subunits are generated from the proenzyme in this reaction, and the pyruvate is formed at the N-terminus of the alpha chain, which is derived from the carboxyl end of the proenzyme. The post-translation cleavage follows an unusual pathway, termed non-hydrolytic serinolysis, in which the side chain hydroxyl group of the serine supplies its oxygen atom to form the C-terminus of the beta chain, while the remainder of the serine residue undergoes an oxidative deamination to produce ammonia and the pyruvoyl group blocking the N-terminus of the alpha chain.

The enzyme catalyses S-adenosyl-L-methionine + H(+) = S-adenosyl 3-(methylsulfanyl)propylamine + CO2. It functions in the pathway amine and polyamine biosynthesis; S-adenosylmethioninamine biosynthesis; S-adenosylmethioninamine from S-adenosyl-L-methionine: step 1/1. Functionally, catalyzes the decarboxylation of S-adenosylmethionine to S-adenosylmethioninamine (dcAdoMet), the propylamine donor required for the synthesis of the polyamines spermine and spermidine from the diamine putrescine. This is S-adenosylmethionine decarboxylase proenzyme from Thermoanaerobacter pseudethanolicus (strain ATCC 33223 / 39E) (Clostridium thermohydrosulfuricum).